Here is a 444-residue protein sequence, read N- to C-terminus: Xaa-Pro dipeptidase (444 aa).

Mn(2+)-binding residues include Asp247, Asp258, His340, Glu385, and Glu424.

The protein belongs to the peptidase M24B family. Bacterial-type prolidase subfamily. The cofactor is Mn(2+).

It catalyses the reaction Xaa-L-Pro dipeptide + H2O = an L-alpha-amino acid + L-proline. Splits dipeptides with a prolyl residue in the C-terminal position. This is Xaa-Pro dipeptidase from Proteus mirabilis (strain HI4320).